Reading from the N-terminus, the 143-residue chain is uncharacterized protein (143 aa).

The segment at 35 to 59 (ITKDRGDRDDGRYGEPRIQRKPGQL) is disordered. Positions 36-52 (TKDRGDRDDGRYGEPRI) are enriched in basic and acidic residues.

This is an uncharacterized protein from Streptomyces fradiae (Streptomyces roseoflavus).